The chain runs to 297 residues: N-acetylmuramic acid 6-phosphate etherase (297 aa).

The SIS domain occupies 55 to 218 (AAAALTRGGR…STGAMVKCGK (164 aa)). Residue E83 is the Proton donor of the active site. E114 is a catalytic residue.

The protein belongs to the GCKR-like family. MurNAc-6-P etherase subfamily. As to quaternary structure, homodimer.

It catalyses the reaction N-acetyl-D-muramate 6-phosphate + H2O = N-acetyl-D-glucosamine 6-phosphate + (R)-lactate. It functions in the pathway amino-sugar metabolism; 1,6-anhydro-N-acetylmuramate degradation. Its pathway is amino-sugar metabolism; N-acetylmuramate degradation. The protein operates within cell wall biogenesis; peptidoglycan recycling. In terms of biological role, specifically catalyzes the cleavage of the D-lactyl ether substituent of MurNAc 6-phosphate, producing GlcNAc 6-phosphate and D-lactate. Together with AnmK, is also required for the utilization of anhydro-N-acetylmuramic acid (anhMurNAc) either imported from the medium or derived from its own cell wall murein, and thus plays a role in cell wall recycling. The sequence is that of N-acetylmuramic acid 6-phosphate etherase from Cronobacter sakazakii (strain ATCC BAA-894) (Enterobacter sakazakii).